Reading from the N-terminus, the 179-residue chain is Ribosome maturation factor RimM (179 aa).

The PRC barrel domain occupies 102–173; that stretch reads PEEYHYRDLI…ALHVQPPPGL (72 aa).

Belongs to the RimM family. As to quaternary structure, binds ribosomal protein uS19.

It localises to the cytoplasm. An accessory protein needed during the final step in the assembly of 30S ribosomal subunit, possibly for assembly of the head region. Essential for efficient processing of 16S rRNA. May be needed both before and after RbfA during the maturation of 16S rRNA. It has affinity for free ribosomal 30S subunits but not for 70S ribosomes. The polypeptide is Ribosome maturation factor RimM (Synechococcus sp. (strain JA-2-3B'a(2-13)) (Cyanobacteria bacterium Yellowstone B-Prime)).